A 224-amino-acid polypeptide reads, in one-letter code: Probable GTP-binding protein EngB (224 aa).

Residues 27–201 (SGIEVAFAGR…DAIICQWLEQ (175 aa)) enclose the EngB-type G domain. Residues 35–42 (GRSNAGKS), 62–66 (GRTQL), 80–83 (DLPG), 147–150 (TKCD), and 180–182 (FSS) each bind GTP. Mg(2+) contacts are provided by Ser42 and Thr64. A disordered region spans residues 205–224 (EYELPEEDDFDDSDEFTEEE).

This sequence belongs to the TRAFAC class TrmE-Era-EngA-EngB-Septin-like GTPase superfamily. EngB GTPase family. Requires Mg(2+) as cofactor.

Necessary for normal cell division and for the maintenance of normal septation. The sequence is that of Probable GTP-binding protein EngB from Colwellia psychrerythraea (strain 34H / ATCC BAA-681) (Vibrio psychroerythus).